A 289-amino-acid chain; its full sequence is Ribosomal protein L11 methyltransferase (289 aa).

Residues threonine 142, glycine 163, aspartate 185, and asparagine 226 each contribute to the S-adenosyl-L-methionine site.

This sequence belongs to the methyltransferase superfamily. PrmA family.

Its subcellular location is the cytoplasm. The catalysed reaction is L-lysyl-[protein] + 3 S-adenosyl-L-methionine = N(6),N(6),N(6)-trimethyl-L-lysyl-[protein] + 3 S-adenosyl-L-homocysteine + 3 H(+). In terms of biological role, methylates ribosomal protein L11. This chain is Ribosomal protein L11 methyltransferase, found in Legionella pneumophila (strain Paris).